Here is a 200-residue protein sequence, read N- to C-terminus: General odorant-binding protein 70 (200 aa).

The signal sequence occupies residues 1 to 29 (MRRQYSMWASTVAVIACGSALMLLHPVGA). Intrachain disulfides connect Cys105/Cys174 and Cys152/Cys183.

Belongs to the PBP/GOBP family.

Its subcellular location is the secreted. Functionally, present in the aqueous fluid surrounding olfactory sensory dendrites and are thought to aid in the capture and transport of hydrophobic odorants into and through this fluid. The sequence is that of General odorant-binding protein 70 (Obp70) from Anopheles gambiae (African malaria mosquito).